Reading from the N-terminus, the 110-residue chain is Spermatid nuclear transition protein 3 (110 aa).

Positions 80 to 110 are disordered; the sequence is RSCAREKLNQSRKRYQNMRQSQRRGQNQKRR.

It is found in the nucleus. The protein localises to the chromosome. Involved in nuclear basic protein transition: histones are replaced by spermatid specific proteins which are themselves replaced by protamines in late spermatids. The chain is Spermatid nuclear transition protein 3 from Ovis aries (Sheep).